Here is a 215-residue protein sequence, read N- to C-terminus: Urease accessory protein UreG (215 aa).

The disordered stretch occupies residues 1 to 21 (MNAPAPSSARRTKKLPPLRVG). 24-31 (GPVGSGKT) provides a ligand contact to GTP.

It belongs to the SIMIBI class G3E GTPase family. UreG subfamily. Homodimer. UreD, UreF and UreG form a complex that acts as a GTP-hydrolysis-dependent molecular chaperone, activating the urease apoprotein by helping to assemble the nickel containing metallocenter of UreC. The UreE protein probably delivers the nickel.

The protein resides in the cytoplasm. Facilitates the functional incorporation of the urease nickel metallocenter. This process requires GTP hydrolysis, probably effectuated by UreG. This Burkholderia lata (strain ATCC 17760 / DSM 23089 / LMG 22485 / NCIMB 9086 / R18194 / 383) protein is Urease accessory protein UreG.